A 649-amino-acid chain; its full sequence is Replication factor C small subunit (649 aa).

Residue 55 to 385 coordinates ATP; it reads GPAGVGKCVT…GCIPTVMHNT (331 aa).

It belongs to the activator 1 small subunits family. RfcS subfamily. In terms of assembly, heteromultimer composed of small subunits (RfcS) and large subunits (RfcL). In terms of processing, this protein undergoes a protein self splicing that involves a post-translational excision of the intervening region (intein) followed by peptide ligation.

Part of the RFC clamp loader complex which loads the PCNA sliding clamp onto DNA. In Haloquadratum walsbyi (strain DSM 16790 / HBSQ001), this protein is Replication factor C small subunit (rfcS).